Reading from the N-terminus, the 319-residue chain is Beta-ketoacyl-[acyl-carrier-protein] synthase III (319 aa).

Residues Cys110 and His246 contribute to the active site. Residues 247–251 are ACP-binding; the sequence is QANYR. Asn276 is an active-site residue.

The protein belongs to the thiolase-like superfamily. FabH family. Homodimer.

It is found in the cytoplasm. The catalysed reaction is malonyl-[ACP] + acetyl-CoA + H(+) = 3-oxobutanoyl-[ACP] + CO2 + CoA. It functions in the pathway lipid metabolism; fatty acid biosynthesis. Its function is as follows. Catalyzes the condensation reaction of fatty acid synthesis by the addition to an acyl acceptor of two carbons from malonyl-ACP. Catalyzes the first condensation reaction which initiates fatty acid synthesis and may therefore play a role in governing the total rate of fatty acid production. Possesses both acetoacetyl-ACP synthase and acetyl transacylase activities. Its substrate specificity determines the biosynthesis of branched-chain and/or straight-chain of fatty acids. The polypeptide is Beta-ketoacyl-[acyl-carrier-protein] synthase III (Lactobacillus delbrueckii subsp. bulgaricus (strain ATCC BAA-365 / Lb-18)).